Consider the following 458-residue polypeptide: Cysteine protease ATG4C (458 aa).

Methionine 1 carries the post-translational modification N-acetylmethionine. The active-site Nucleophile is cysteine 111. Residues aspartate 345 and histidine 347 contribute to the active site. Phosphoserine is present on serine 451. The residue at position 452 (threonine 452) is a Phosphothreonine.

Belongs to the peptidase C54 family.

Its subcellular location is the cytoplasm. The catalysed reaction is [protein]-C-terminal L-amino acid-glycyl-phosphatidylethanolamide + H2O = [protein]-C-terminal L-amino acid-glycine + a 1,2-diacyl-sn-glycero-3-phosphoethanolamine. Its activity is regulated as follows. Inhibited by N-ethylmaleimide. Its function is as follows. Cysteine protease that plays a key role in autophagy by mediating both proteolytic activation and delipidation of ATG8 family proteins. The protease activity is required for proteolytic activation of ATG8 family proteins: cleaves the C-terminal amino acid of ATG8 proteins MAP1LC3 and GABARAPL2, to reveal a C-terminal glycine. Exposure of the glycine at the C-terminus is essential for ATG8 proteins conjugation to phosphatidylethanolamine (PE) and insertion to membranes, which is necessary for autophagy. In addition to the protease activity, also mediates delipidation of ATG8 family proteins. Catalyzes delipidation of PE-conjugated forms of ATG8 proteins during macroautophagy. Compared to ATG4B, the major protein for proteolytic activation of ATG8 proteins, shows weaker ability to cleave the C-terminal amino acid of ATG8 proteins, while it displays stronger delipidation activity. In contrast to other members of the family, weakly or not involved in phagophore growth during mitophagy. This is Cysteine protease ATG4C from Mus musculus (Mouse).